The chain runs to 211 residues: Claudin-1 (211 aa).

The Cytoplasmic segment spans residues 1–7 (MANAGLQ). The chain crosses the membrane as a helical span at residues 8–28 (LLGFILASLGWIGSIVSTALP). At 29–81 (QWKIYSYAGDNIVTAQAIYEGLWMSCVSQSTGQIQCKVFDSLLNLNSTLQATR) the chain is on the extracellular side. Cys-54 and Cys-64 are disulfide-bonded. A helical membrane pass occupies residues 82–102 (ALMVIGILLGLIAIFVSTIGM). Residues 103–115 (KCMRCLEDDEVQK) are Cytoplasmic-facing. A helical transmembrane segment spans residues 116–136 (MWMAVIGGIIFLISGLATLVA). Residues 137–163 (TAWYGNRIVQEFYDPLTPINARYEFGQ) are Extracellular-facing. Residues 164-184 (ALFTGWAAASLCLLGGVLLSC) form a helical membrane-spanning segment. Over 185–211 (SCPRKTTSYPTPRPYPKPTPSSGKDYV) the chain is Cytoplasmic. The interval 190–211 (TTSYPTPRPYPKPTPSSGKDYV) is disordered. The segment at 210–211 (YV) is interactions with TJP1, TJP2, TJP3 and PATJ.

This sequence belongs to the claudin family. In terms of assembly, can form homo- and heteropolymers with other CLDN. Homopolymers interact with CLDN3, but not CLDN2, homopolymers. Directly interacts with TJP1/ZO-1, TJP2/ZO-2 and TJP3/ZO-3. Interacts with MPDZ and PATJ. Interacts with OCLN, CD81, CLDN4, CLDN6 and CLDN9. Detected in epidermis and liver (at protein level). Widely expressed, with highest levels in liver and kidney.

The protein resides in the cell junction. Its subcellular location is the tight junction. The protein localises to the cell membrane. It is found in the basolateral cell membrane. In terms of biological role, claudins function as major constituents of the tight junction complexes that regulate the permeability of epithelia. While some claudin family members play essential roles in the formation of impermeable barriers, others mediate the permeability to ions and small molecules. Often, several claudin family members are coexpressed and interact with each other, and this determines the overall permeability. CLDN1 is required to prevent the paracellular diffusion of small molecules through tight junctions in the epidermis and is required for the normal barrier function of the skin. Required for normal water homeostasis and to prevent excessive water loss through the skin, probably via an indirect effect on the expression levels of other proteins, since CLDN1 itself seems to be dispensable for water barrier formation in keratinocyte tight junctions. The chain is Claudin-1 (Cldn1) from Mus musculus (Mouse).